We begin with the raw amino-acid sequence, 243 residues long: Ubiquinone/menaquinone biosynthesis C-methyltransferase UbiE (243 aa).

S-adenosyl-L-methionine is bound by residues T69, D90, and D116–A117.

It belongs to the class I-like SAM-binding methyltransferase superfamily. MenG/UbiE family.

The catalysed reaction is a 2-demethylmenaquinol + S-adenosyl-L-methionine = a menaquinol + S-adenosyl-L-homocysteine + H(+). It catalyses the reaction a 2-methoxy-6-(all-trans-polyprenyl)benzene-1,4-diol + S-adenosyl-L-methionine = a 5-methoxy-2-methyl-3-(all-trans-polyprenyl)benzene-1,4-diol + S-adenosyl-L-homocysteine + H(+). It participates in quinol/quinone metabolism; menaquinone biosynthesis; menaquinol from 1,4-dihydroxy-2-naphthoate: step 2/2. It functions in the pathway cofactor biosynthesis; ubiquinone biosynthesis. Its function is as follows. Methyltransferase required for the conversion of demethylmenaquinol (DMKH2) to menaquinol (MKH2) and the conversion of 2-polyprenyl-6-methoxy-1,4-benzoquinol (DDMQH2) to 2-polyprenyl-3-methyl-6-methoxy-1,4-benzoquinol (DMQH2). This Ralstonia nicotianae (strain ATCC BAA-1114 / GMI1000) (Ralstonia solanacearum) protein is Ubiquinone/menaquinone biosynthesis C-methyltransferase UbiE.